The following is a 425-amino-acid chain: Nuclear pore complex-interacting protein family member B6 (425 aa).

A disordered region spans residues 332–414; sequence SPLPPSVDDN…RRLSKLRTRH (83 aa). Residues 353 to 395 are compositionally biased toward basic and acidic residues; that stretch reads EVEKPPKPKRWRVDEVEQSPKPKRRRVDEVEQSPKPKRQREAE. Residues 401-414 show a composition bias toward basic residues; sequence KPKRRRLSKLRTRH.

This sequence belongs to the NPIP family.

This is Nuclear pore complex-interacting protein family member B6 (NPIPB6) from Homo sapiens (Human).